The following is a 121-amino-acid chain: Large ribosomal subunit protein bL12 (121 aa).

It belongs to the bacterial ribosomal protein bL12 family. In terms of assembly, homodimer. Part of the ribosomal stalk of the 50S ribosomal subunit. Forms a multimeric L10(L12)X complex, where L10 forms an elongated spine to which 2 to 4 L12 dimers bind in a sequential fashion. Binds GTP-bound translation factors.

Forms part of the ribosomal stalk which helps the ribosome interact with GTP-bound translation factors. Is thus essential for accurate translation. The sequence is that of Large ribosomal subunit protein bL12 from Macrococcus caseolyticus (strain JCSC5402) (Macrococcoides caseolyticum).